Reading from the N-terminus, the 364-residue chain is Aminomethyltransferase (364 aa).

The protein belongs to the GcvT family. In terms of assembly, the glycine cleavage system is composed of four proteins: P, T, L and H.

It catalyses the reaction N(6)-[(R)-S(8)-aminomethyldihydrolipoyl]-L-lysyl-[protein] + (6S)-5,6,7,8-tetrahydrofolate = N(6)-[(R)-dihydrolipoyl]-L-lysyl-[protein] + (6R)-5,10-methylene-5,6,7,8-tetrahydrofolate + NH4(+). Functionally, the glycine cleavage system catalyzes the degradation of glycine. This chain is Aminomethyltransferase, found in Anoxybacillus flavithermus (strain DSM 21510 / WK1).